We begin with the raw amino-acid sequence, 277 residues long: Ribonuclease HII (277 aa).

A disordered region spans residues 1 to 32 (MIRNQANKPGRAKAATAARKSPLTKSAAKPAA). Low complexity predominate over residues 20–32 (KSPLTKSAAKPAA). Residues 64 to 252 (WPVAGCDEAG…VVAARRKHQP (189 aa)) form the RNase H type-2 domain. A divalent metal cation-binding residues include D70, E71, and D161.

This sequence belongs to the RNase HII family. Mn(2+) serves as cofactor. Mg(2+) is required as a cofactor.

It is found in the cytoplasm. The catalysed reaction is Endonucleolytic cleavage to 5'-phosphomonoester.. Functionally, endonuclease that specifically degrades the RNA of RNA-DNA hybrids. In Bradyrhizobium sp. (strain ORS 278), this protein is Ribonuclease HII.